A 515-amino-acid chain; its full sequence is Zinc-binding protein AdcA (515 aa).

The first 28 residues, 1–28, serve as a signal peptide directing secretion; it reads MKKKILLMMSLISVFFAWQLTQAKQVLA. His66 provides a ligand contact to Zn(2+). Residues 126-148 are disordered; it reads HHHEEADKKHEHNKHSEEGHNHA. The interval 129 to 148 is his-rich loop; sequence EEADKKHEHNKHSEEGHNHA. Zn(2+) is bound by residues His152, His216, and Glu291.

The protein belongs to the bacterial solute-binding protein 9 family.

Part of the ATP-binding cassette (ABC) transport system AdcABC involved in zinc import. Binds zinc with high affinity and specificity and delivers it to the membrane permease for translocation into the cytoplasm. The sequence is that of Zinc-binding protein AdcA (adcA) from Streptococcus pyogenes serotype M3 (strain ATCC BAA-595 / MGAS315).